Consider the following 496-residue polypeptide: Maturase K (496 aa).

It belongs to the intron maturase 2 family. MatK subfamily.

The protein localises to the plastid. The protein resides in the chloroplast. Usually encoded in the trnK tRNA gene intron. Probably assists in splicing its own and other chloroplast group II introns. The sequence is that of Maturase K from Paeonia officinalis (Common peony).